Consider the following 281-residue polypeptide: Phosphatidylglycerol--prolipoprotein diacylglyceryl transferase (281 aa).

Transmembrane regions (helical) follow at residues 29-49 (FYSL…GKMI), 64-84 (LFFY…VLFY), 100-120 (GGMS…FVSW), and 124-144 (LNWL…MFLG). Arg-145 serves as a coordination point for a 1,2-diacyl-sn-glycero-3-phospho-(1'-sn-glycerol). 3 consecutive transmembrane segments (helical) span residues 180 to 200 (QLYQ…LLFW), 209 to 229 (GVLV…NEFF), and 248 to 268 (GQWL…YALT).

Belongs to the Lgt family.

Its subcellular location is the cell inner membrane. The enzyme catalyses L-cysteinyl-[prolipoprotein] + a 1,2-diacyl-sn-glycero-3-phospho-(1'-sn-glycerol) = an S-1,2-diacyl-sn-glyceryl-L-cysteinyl-[prolipoprotein] + sn-glycerol 1-phosphate + H(+). The protein operates within protein modification; lipoprotein biosynthesis (diacylglyceryl transfer). Its function is as follows. Catalyzes the transfer of the diacylglyceryl group from phosphatidylglycerol to the sulfhydryl group of the N-terminal cysteine of a prolipoprotein, the first step in the formation of mature lipoproteins. The protein is Phosphatidylglycerol--prolipoprotein diacylglyceryl transferase of Erythrobacter litoralis (strain HTCC2594).